The following is a 380-amino-acid chain: Cytochrome b (380 aa).

4 consecutive transmembrane segments (helical) span residues 34–54 (FGSLLGICLMTQILTGLLLAM), 78–99 (WLIRNLHANGASFFFICIYLHI), 114–134 (WNTGVMLLLTLMATAFVGYVL), and 179–199 (FFALHFLLPFVIAGLTLIHLT). Residues histidine 84 and histidine 98 each coordinate heme b. The heme b site is built by histidine 183 and histidine 197. Residue histidine 202 participates in a ubiquinone binding. The next 4 helical transmembrane spans lie at 227–247 (LKDILGFMFMLLPLTTLALFS), 289–309 (LGGVLALAASVLILFLVPFLH), 321–341 (LSQLLFWVLVANLLILTWVGS), and 348–368 (FIIIGQLASLTYFTILLILFP).

Belongs to the cytochrome b family. As to quaternary structure, the cytochrome bc1 complex contains 11 subunits: 3 respiratory subunits (MT-CYB, CYC1 and UQCRFS1), 2 core proteins (UQCRC1 and UQCRC2) and 6 low-molecular weight proteins (UQCRH/QCR6, UQCRB/QCR7, UQCRQ/QCR8, UQCR10/QCR9, UQCR11/QCR10 and a cleavage product of UQCRFS1). This cytochrome bc1 complex then forms a dimer. The cofactor is heme b.

Its subcellular location is the mitochondrion inner membrane. Its function is as follows. Component of the ubiquinol-cytochrome c reductase complex (complex III or cytochrome b-c1 complex) that is part of the mitochondrial respiratory chain. The b-c1 complex mediates electron transfer from ubiquinol to cytochrome c. Contributes to the generation of a proton gradient across the mitochondrial membrane that is then used for ATP synthesis. The protein is Cytochrome b (MT-CYB) of Pterodroma hypoleuca (Bonin petrel).